The chain runs to 395 residues: Succinyl-diaminopimelate desuccinylase (395 aa).

H81 serves as a coordination point for Zn(2+). Residue D83 is part of the active site. D114 contacts Zn(2+). E146 acts as the Proton acceptor in catalysis. Zn(2+) contacts are provided by E147, E175, and H364.

Belongs to the peptidase M20A family. DapE subfamily. Homodimer. The cofactor is Zn(2+). It depends on Co(2+) as a cofactor.

The enzyme catalyses N-succinyl-(2S,6S)-2,6-diaminopimelate + H2O = (2S,6S)-2,6-diaminopimelate + succinate. It functions in the pathway amino-acid biosynthesis; L-lysine biosynthesis via DAP pathway; LL-2,6-diaminopimelate from (S)-tetrahydrodipicolinate (succinylase route): step 3/3. Its function is as follows. Catalyzes the hydrolysis of N-succinyl-L,L-diaminopimelic acid (SDAP), forming succinate and LL-2,6-diaminopimelate (DAP), an intermediate involved in the bacterial biosynthesis of lysine and meso-diaminopimelic acid, an essential component of bacterial cell walls. The sequence is that of Succinyl-diaminopimelate desuccinylase from Parvibaculum lavamentivorans (strain DS-1 / DSM 13023 / NCIMB 13966).